We begin with the raw amino-acid sequence, 387 residues long: Anhydro-N-acetylmuramic acid kinase (387 aa).

Residue 9-16 (GTSVDGID) participates in ATP binding.

Belongs to the anhydro-N-acetylmuramic acid kinase family.

It catalyses the reaction 1,6-anhydro-N-acetyl-beta-muramate + ATP + H2O = N-acetyl-D-muramate 6-phosphate + ADP + H(+). It participates in amino-sugar metabolism; 1,6-anhydro-N-acetylmuramate degradation. Its pathway is cell wall biogenesis; peptidoglycan recycling. Functionally, catalyzes the specific phosphorylation of 1,6-anhydro-N-acetylmuramic acid (anhMurNAc) with the simultaneous cleavage of the 1,6-anhydro ring, generating MurNAc-6-P. Is required for the utilization of anhMurNAc either imported from the medium or derived from its own cell wall murein, and thus plays a role in cell wall recycling. This Synechocystis sp. (strain ATCC 27184 / PCC 6803 / Kazusa) protein is Anhydro-N-acetylmuramic acid kinase.